The chain runs to 504 residues: MFGDRQRPMVLVLGLGESGLAIARWCARHGCRLRIADTRETPPNLAALTAAGIDAEFVGGAFSPALIDGGIELVALSPGLSPLAEDLAPLVAAARERGIPVWGELEFFAQALTTLGANGYAPKVIAITGTNGKTTTTSLAGLLCERAGKTVAVAGNISPAMLDKLTEAIDAAALPDVWVLELSSFQLDTAHTFAPDAATILNITQDHLDWHGGFAAYAAAKGRIFGPRTVRVLNRDDAEVMKFAPPAAAADAPRAITFGLNEPAADGDYGLLRENGIAWLVEAVDRDAADAPATPSRRRKQEAANPPDIALKRLMPADALRIRGLHNAANALAAYALARAIDLPAAPLLHGLREYRGEPHRVEVIATLDGVDYVDDSKGTNVGATVAALDGLAQRAVLIAGGDGKGQDFEPLAAPVARWCRAVMLIGRDAPALREALADTGVPLADHATLESAVRAAGALAQPGDAVLLSPACASLDMFRNYAHRADVFRSAVEDIALEKGTTL.

Residue 129–135 (GTNGKTT) participates in ATP binding.

This sequence belongs to the MurCDEF family.

Its subcellular location is the cytoplasm. The catalysed reaction is UDP-N-acetyl-alpha-D-muramoyl-L-alanine + D-glutamate + ATP = UDP-N-acetyl-alpha-D-muramoyl-L-alanyl-D-glutamate + ADP + phosphate + H(+). It participates in cell wall biogenesis; peptidoglycan biosynthesis. In terms of biological role, cell wall formation. Catalyzes the addition of glutamate to the nucleotide precursor UDP-N-acetylmuramoyl-L-alanine (UMA). The sequence is that of UDP-N-acetylmuramoylalanine--D-glutamate ligase from Burkholderia thailandensis (strain ATCC 700388 / DSM 13276 / CCUG 48851 / CIP 106301 / E264).